The following is a 340-amino-acid chain: NADH-quinone oxidoreductase subunit H (340 aa).

Helical transmembrane passes span 4 to 24 (TIGI…PLLI), 78 to 98 (YLFV…WAVI), 113 to 133 (VLYL…AGWA), 151 to 171 (VSYE…AGSM), 184 to 204 (MLHW…ISGI), 244 to 264 (SMIL…LSPF), 273 to 293 (IFFI…FLFV), and 316 to 336 (VLIP…VAHV).

This sequence belongs to the complex I subunit 1 family. As to quaternary structure, NDH-1 is composed of 14 different subunits. Subunits NuoA, H, J, K, L, M, N constitute the membrane sector of the complex.

The protein localises to the cell inner membrane. It catalyses the reaction a quinone + NADH + 5 H(+)(in) = a quinol + NAD(+) + 4 H(+)(out). Functionally, NDH-1 shuttles electrons from NADH, via FMN and iron-sulfur (Fe-S) centers, to quinones in the respiratory chain. The immediate electron acceptor for the enzyme in this species is believed to be ubiquinone. Couples the redox reaction to proton translocation (for every two electrons transferred, four hydrogen ions are translocated across the cytoplasmic membrane), and thus conserves the redox energy in a proton gradient. This subunit may bind ubiquinone. The protein is NADH-quinone oxidoreductase subunit H of Legionella pneumophila (strain Lens).